A 471-amino-acid chain; its full sequence is Uronate isomerase (471 aa).

This sequence belongs to the metallo-dependent hydrolases superfamily. Uronate isomerase family.

The enzyme catalyses D-glucuronate = D-fructuronate. It catalyses the reaction aldehydo-D-galacturonate = keto-D-tagaturonate. Its pathway is carbohydrate metabolism; pentose and glucuronate interconversion. The chain is Uronate isomerase from Xanthomonas campestris pv. campestris (strain B100).